The sequence spans 424 residues: L-glutamine:scyllo-inosose aminotransferase (424 aa).

Residues 1 to 21 (MDSSLAISGGPRLSNREWPRW) are disordered. N6-(pyridoxal phosphate)lysine is present on lysine 202.

Belongs to the DegT/DnrJ/EryC1 family. L-glutamine:2-deoxy-scyllo-inosose/scyllo-inosose aminotransferase subfamily. Homodimer. The cofactor is pyridoxal 5'-phosphate.

The catalysed reaction is scyllo-inosose + L-glutamine = 1-amino-1-deoxy-scyllo-inositol + 2-oxoglutaramate. It functions in the pathway antibiotic biosynthesis; streptomycin biosynthesis. Its function is as follows. Catalyzes the PLP-dependent transamination of scyllo-inosose to form scyllo-inosamine. The protein is L-glutamine:scyllo-inosose aminotransferase (stsC) of Streptomyces griseus.